Here is a 69-residue protein sequence, read N- to C-terminus: uncharacterized protein (69 aa).

This is an uncharacterized protein from Saccharomyces cerevisiae (strain ATCC 204508 / S288c) (Baker's yeast).